The chain runs to 44 residues: Photosystem I reaction center subunit IX (44 aa).

Residues 7–27 (YLSVAPVLSTLSLGFFAGFLI) form a helical membrane-spanning segment.

Belongs to the PsaJ family.

It is found in the plastid membrane. May help in the organization of the PsaE and PsaF subunits. The polypeptide is Photosystem I reaction center subunit IX (Cuscuta obtusiflora (Peruvian dodder)).